The primary structure comprises 380 residues: Glucose-1-phosphate adenylyltransferase (380 aa).

Alpha-D-glucose 1-phosphate is bound by residues Gly164, 179–180, and Ser190; that span reads EK.

It belongs to the bacterial/plant glucose-1-phosphate adenylyltransferase family. As to quaternary structure, homotetramer.

It catalyses the reaction alpha-D-glucose 1-phosphate + ATP + H(+) = ADP-alpha-D-glucose + diphosphate. It participates in glycan biosynthesis; glycogen biosynthesis. Functionally, involved in the biosynthesis of ADP-glucose, a building block required for the elongation reactions to produce glycogen. Catalyzes the reaction between ATP and alpha-D-glucose 1-phosphate (G1P) to produce pyrophosphate and ADP-Glc. The chain is Glucose-1-phosphate adenylyltransferase from Lactococcus lactis subsp. cremoris (strain MG1363).